The sequence spans 90 residues: Bombyxin D-1 (90 aa).

The first 18 residues, 1-18 (MKLLGFFLSWVSVCAIVS), serve as a signal peptide directing secretion. Cystine bridges form between C27–C77, C39–C90, and C76–C81. A propeptide spans 48–68 (SVAHYAGYGWPLLPSLSEERG) (c peptide like).

Belongs to the insulin family. In terms of assembly, heterodimer of a B chain and an A chain linked by two disulfide bonds.

The protein localises to the secreted. In terms of biological role, brain peptide responsible for activation of prothoracic glands to produce ecdysone in insects. This Bombyx mori (Silk moth) protein is Bombyxin D-1 (BBXD1).